Here is a 590-residue protein sequence, read N- to C-terminus: UvrABC system protein C (590 aa).

The GIY-YIG domain maps to 14–91 (EQPGCYLMKD…IKKHDPKYNV (78 aa)). Residues 196 to 231 (EDVKRELAEKMHEAAETLEFERAKEYRDQIAAIEMT) form the UVR domain.

This sequence belongs to the UvrC family. Interacts with UvrB in an incision complex.

It localises to the cytoplasm. In terms of biological role, the UvrABC repair system catalyzes the recognition and processing of DNA lesions. UvrC both incises the 5' and 3' sides of the lesion. The N-terminal half is responsible for the 3' incision and the C-terminal half is responsible for the 5' incision. The polypeptide is UvrABC system protein C (Geobacillus kaustophilus (strain HTA426)).